Reading from the N-terminus, the 232-residue chain is Phosphatidylserine decarboxylase proenzyme (232 aa).

The active-site Schiff-base intermediate with substrate; via pyruvic acid is Ser190. Residue Ser190 is modified to Pyruvic acid (Ser); by autocatalysis.

Belongs to the phosphatidylserine decarboxylase family. PSD-A subfamily. As to quaternary structure, heterodimer of a large membrane-associated beta subunit and a small pyruvoyl-containing alpha subunit. It depends on pyruvate as a cofactor. Is synthesized initially as an inactive proenzyme. Formation of the active enzyme involves a self-maturation process in which the active site pyruvoyl group is generated from an internal serine residue via an autocatalytic post-translational modification. Two non-identical subunits are generated from the proenzyme in this reaction, and the pyruvate is formed at the N-terminus of the alpha chain, which is derived from the carboxyl end of the proenzyme. The post-translation cleavage follows an unusual pathway, termed non-hydrolytic serinolysis, in which the side chain hydroxyl group of the serine supplies its oxygen atom to form the C-terminus of the beta chain, while the remainder of the serine residue undergoes an oxidative deamination to produce ammonia and the pyruvoyl prosthetic group on the alpha chain.

The protein resides in the cell membrane. It catalyses the reaction a 1,2-diacyl-sn-glycero-3-phospho-L-serine + H(+) = a 1,2-diacyl-sn-glycero-3-phosphoethanolamine + CO2. It functions in the pathway phospholipid metabolism; phosphatidylethanolamine biosynthesis; phosphatidylethanolamine from CDP-diacylglycerol: step 2/2. Its function is as follows. Catalyzes the formation of phosphatidylethanolamine (PtdEtn) from phosphatidylserine (PtdSer). In Bartonella henselae (strain ATCC 49882 / DSM 28221 / CCUG 30454 / Houston 1) (Rochalimaea henselae), this protein is Phosphatidylserine decarboxylase proenzyme.